Consider the following 394-residue polypeptide: Elongation factor Tu (394 aa).

The 195-residue stretch at 10 to 204 folds into the tr-type G domain; it reads KPHVNVGTIG…ALDSYIPEPE (195 aa). The G1 stretch occupies residues 19–26; it reads GHVDHGKT. GTP is bound at residue 19–26; it reads GHVDHGKT. Residue Thr26 participates in Mg(2+) binding. Residues 60-64 form a G2 region; that stretch reads GITIS. A G3 region spans residues 81–84; it reads DCPG. Residues 81–85 and 136–139 each bind GTP; these read DCPGH and NKCD. The interval 136–139 is G4; sequence NKCD. Residues 174 to 176 are G5; it reads SAL.

This sequence belongs to the TRAFAC class translation factor GTPase superfamily. Classic translation factor GTPase family. EF-Tu/EF-1A subfamily. As to quaternary structure, monomer.

The protein localises to the cytoplasm. It carries out the reaction GTP + H2O = GDP + phosphate + H(+). In terms of biological role, GTP hydrolase that promotes the GTP-dependent binding of aminoacyl-tRNA to the A-site of ribosomes during protein biosynthesis. The polypeptide is Elongation factor Tu (Pseudoalteromonas atlantica (strain T6c / ATCC BAA-1087)).